Reading from the N-terminus, the 698-residue chain is Dynein regulatory complex protein 1 (698 aa).

Basic and acidic residues-rich tracts occupy residues 27 to 47 (ALRE…EIGK) and 76 to 90 (AGDD…QEEQ). Disordered stretches follow at residues 27 to 50 (ALRE…KGKQ) and 71 to 90 (SSVR…QEEQ). A coiled-coil region spans residues 183–367 (MSRQFVEVQN…DLQSKFRHFE (185 aa)). The segment at 425–461 (SGGGAAAAATGGAAGGAAAAGGVGPNGEEESEEDAAA) is disordered. Gly residues predominate over residues 436 to 449 (GAAGGAAAAGGVGP). The stretch at 655-685 (QERAGSLRDVESLQHQNNELRALLNQYLSSR) forms a coiled coil.

The protein belongs to the DRC1 family. Component of the nexin-dynein regulatory complex (N-DRC). Interacts with DRC4 and DRC5.

It localises to the cytoplasm. The protein localises to the cytoskeleton. The protein resides in the cilium axoneme. Its subcellular location is the flagellum axoneme. Its function is as follows. Component of the nexin-dynein regulatory complex (N-DRC) a key regulator of ciliary/flagellar motility which maintains the alignment and integrity of the distal axoneme and regulates microtubule sliding in motile axonemes. Plays a critical role in the assembly of N-DRC and also stabilizes the assembly of multiple inner dynein arms and radial spokes. Coassembles with DRC2 to form a central scaffold needed for assembly of the N-DRC and its attachment to the outer doublet microtubules. In Chlamydomonas reinhardtii (Chlamydomonas smithii), this protein is Dynein regulatory complex protein 1 (DRC1).